The chain runs to 456 residues: Putative dihydroorotase (456 aa).

The protein belongs to the metallo-dependent hydrolases superfamily. DHOase family. Class I DHOase subfamily.

The catalysed reaction is (S)-dihydroorotate + H2O = N-carbamoyl-L-aspartate + H(+). It participates in pyrimidine metabolism; UMP biosynthesis via de novo pathway; (S)-dihydroorotate from bicarbonate: step 3/3. In terms of biological role, catalyzes the reversible cyclization of carbamoyl aspartate to dihydroorotate. This is Putative dihydroorotase from Rhodopirellula baltica (strain DSM 10527 / NCIMB 13988 / SH1).